A 938-amino-acid polypeptide reads, in one-letter code: Isoleucine--tRNA ligase (938 aa).

Residues 58-68 (PYANGSIHIGH) carry the 'HIGH' region motif. Lys183 is modified (N6-acetyllysine). Glu561 lines the L-isoleucyl-5'-AMP pocket. A 'KMSKS' region motif is present at residues 602–606 (KMSKS). Residue Lys605 coordinates ATP. 4 residues coordinate Zn(2+): Cys901, Cys904, Cys921, and Cys924.

Belongs to the class-I aminoacyl-tRNA synthetase family. IleS type 1 subfamily. In terms of assembly, monomer. Zn(2+) is required as a cofactor.

It is found in the cytoplasm. It catalyses the reaction tRNA(Ile) + L-isoleucine + ATP = L-isoleucyl-tRNA(Ile) + AMP + diphosphate. Its function is as follows. Catalyzes the attachment of isoleucine to tRNA(Ile). As IleRS can inadvertently accommodate and process structurally similar amino acids such as valine, to avoid such errors it has two additional distinct tRNA(Ile)-dependent editing activities. One activity is designated as 'pretransfer' editing and involves the hydrolysis of activated Val-AMP. The other activity is designated 'posttransfer' editing and involves deacylation of mischarged Val-tRNA(Ile). The polypeptide is Isoleucine--tRNA ligase (Escherichia coli O17:K52:H18 (strain UMN026 / ExPEC)).